The primary structure comprises 70 residues: UPF0426 protein ssl0294 (70 aa).

The protein belongs to the UPF0426 family.

In Synechocystis sp. (strain ATCC 27184 / PCC 6803 / Kazusa), this protein is UPF0426 protein ssl0294.